A 318-amino-acid chain; its full sequence is Ferric enterobactin-binding periplasmic protein FepB (318 aa).

The N-terminal stretch at 1 to 26 (MRLAPLYRNALLLTGLLLSGIAAVQA) is a signal peptide. Residues 48-318 (RIVSTSVTLT…QVLDRLKALF (271 aa)) enclose the Fe/B12 periplasmic-binding domain.

It belongs to the bacterial solute-binding protein 8 family. In terms of assembly, the complex is composed of two ATP-binding proteins (FepC), two transmembrane proteins (FepD and FepG) and a solute-binding protein (FepB).

The protein resides in the periplasm. Part of the ABC transporter complex FepBDGC involved in ferric enterobactin uptake. Binds ferric enterobactin. This Escherichia coli O6:H1 (strain CFT073 / ATCC 700928 / UPEC) protein is Ferric enterobactin-binding periplasmic protein FepB (fepB).